The following is a 269-amino-acid chain: uncharacterized protein (269 aa).

Residues 3-66 adopt a coiled-coil conformation; the sequence is VDQAAIDEIL…QNLQNLAEGA (64 aa). Residues 83–142 form a disordered region; the sequence is AQIPEPPKPEPEVEQPETETGPEPEPEAEPELKEVKEDEPPEEDVVRELDESKSAEPIPE. The segment covering 94 to 111 has biased composition (acidic residues); sequence EVEQPETETGPEPEPEAE. Basic and acidic residues predominate over residues 112–136; the sequence is PELKEVKEDEPPEEDVVRELDESKS.

This is an uncharacterized protein from Archaeoglobus fulgidus (strain ATCC 49558 / DSM 4304 / JCM 9628 / NBRC 100126 / VC-16).